The sequence spans 139 residues: Large ribosomal subunit protein uL13 (139 aa).

It belongs to the universal ribosomal protein uL13 family. As to quaternary structure, part of the 50S ribosomal subunit.

Its function is as follows. This protein is one of the early assembly proteins of the 50S ribosomal subunit, although it is not seen to bind rRNA by itself. It is important during the early stages of 50S assembly. In Aliarcobacter butzleri (strain RM4018) (Arcobacter butzleri), this protein is Large ribosomal subunit protein uL13.